A 535-amino-acid polypeptide reads, in one-letter code: Cytochrome P450 monooxygenase claQ (535 aa).

2 helical membrane-spanning segments follow: residues 7–27 (IGTW…KLVG) and 225–245 (YFAI…NLPT). Cys-472 contributes to the heme binding site.

It belongs to the cytochrome P450 family. It depends on heme as a cofactor.

It is found in the membrane. The protein operates within secondary metabolite biosynthesis; terpenoid biosynthesis. Its function is as follows. Cytochrome P450 monooxygenase; part of the gene cluster that mediates the biosynthesis of clavilactone A, a meroterpenoid that features a unique benzo-fused ten-membered carbocyclic ring unit with an alpha,beta-epoxy-gamma-lactone moiety, forming an intriguing 10/5/3 tricyclic nested skeleton. Cytochrome P450 monooxygenases claO, claP, claQ, claU, and claW are close orthologs, suggesting that a redundant function or pseudogenes are present in the cla cluster. These monoxygenases are not involved in clavilactone A biosynthesis nor its modification. ClaR, ClaS and ClaT are sufficient to produce clavilactone A. The biosynthesis begins with the prenyltransferase claS that transfers geranyl pyrophosphate (GPP) to hydroquinone to produces geranylhydroquinone. The cytochrome P450 monooxygenase claR then catalyzes the diradical coupling reaction between the intramolecular hydroquinone and allyl moieties to form the benzo-fused ten-membered carbocyclic ring unit of wigantol. Finally the cytochrome P450 monooxygenase claT exquisitely and stereoselectively assembles the alpha,beta-epoxy-gamma-lactone moiety, producing clavilactone A via arnebinol A. This is Cytochrome P450 monooxygenase claQ from Ampulloclitocybe clavipes (Club foot).